The chain runs to 49 residues: Agglutinin-1 (49 aa).

In terms of assembly, homooligomer. Post-translationally, glycosylated.

Beta-galactoside specific lectin. Has a hemagglutinating activity on erythrocytes. The polypeptide is Agglutinin-1 (Pomacea flagellata (Apple snail)).